The chain runs to 287 residues: METAAGSERRSTPGPAVPPPPRGHAPLATASGPLSSPAREPPQPEEERQLRISESGQFSDGLEDRGLLESSTRLKPHEAQNYRKKALWVSWFSIIVTLALAVAAFTVSVMRYSASAFGFAFDAILDVLSSAIVLWRYSNAAAVHSAHREYIACVILGVIFLLSSVCIVVKAIHDLSTKLLPEVDDFLFSVSILSGILCSILAVLKFMLGKVLTSRALITDGFNSLVGGVMGFSILLSAEVFKHNSAVWYLDGSIGVLIGLTIFAYGVKLLIDMVPRVRQTRHYEMFE.

The segment at 1-63 is disordered; it reads METAAGSERR…ESGQFSDGLE (63 aa). Topologically, residues 1–86 are cytoplasmic; sequence METAAGSERR…HEAQNYRKKA (86 aa). Phosphoserine is present on residues Ser11, Ser53, Ser55, and Ser59. The interval 40–70 is required for interaction with MCOLN1; sequence EPPQPEEERQLRISESGQFSDGLEDRGLLES. A helical transmembrane segment spans residues 87-107; the sequence is LWVSWFSIIVTLALAVAAFTV. Residues 108–114 lie on the Extracellular side of the membrane; the sequence is SVMRYSA. A helical transmembrane segment spans residues 115–135; the sequence is SAFGFAFDAILDVLSSAIVLW. The Cytoplasmic portion of the chain corresponds to 136-148; sequence RYSNAAAVHSAHR. A helical transmembrane segment spans residues 149 to 169; it reads EYIACVILGVIFLLSSVCIVV. Residues 170–185 lie on the Extracellular side of the membrane; that stretch reads KAIHDLSTKLLPEVDD. Residues 186–206 form a helical membrane-spanning segment; it reads FLFSVSILSGILCSILAVLKF. Topologically, residues 207-215 are cytoplasmic; the sequence is MLGKVLTSR. Residues 216 to 236 traverse the membrane as a helical segment; the sequence is ALITDGFNSLVGGVMGFSILL. The Extracellular portion of the chain corresponds to 237–253; the sequence is SAEVFKHNSAVWYLDGS. The helical transmembrane segment at 254–274 threads the bilayer; it reads IGVLIGLTIFAYGVKLLIDMV. At 275–287 the chain is on the cytoplasmic side; it reads PRVRQTRHYEMFE.

This sequence belongs to the TMEM163 family. In terms of assembly, homodimer. Interacts with MCOLN1/TRPML1. Interacts with SLC30A1, SLC30A2, SLC30A3 and SLC30A4.

It is found in the cytoplasmic vesicle. The protein resides in the secretory vesicle. Its subcellular location is the synaptic vesicle membrane. The protein localises to the early endosome membrane. It localises to the late endosome membrane. It is found in the lysosome membrane. The protein resides in the cell membrane. The catalysed reaction is Zn(2+)(in) = Zn(2+)(out). Zinc ion transporter that mediates zinc efflux and plays a crucial role in intracellular zinc homeostasis. Binds the divalent cations Zn(2+), Ni(2+), and to a minor extent Cu(2+). Is a functional modulator of P2X purinoceptors, including P2RX1, P2RX3, P2RX4 and P2RX7. Plays a role in central nervous system development and is required for myelination, and survival and proliferation of oligodendrocytes. The sequence is that of Transmembrane protein 163 (TMEM163) from Bos taurus (Bovine).